The following is a 606-amino-acid chain: Protein couch potato (606 aa).

The Nuclear localization signal signature appears at 81–105 (IKRRPTLPQTPASAPQVLSPSPKRQ). 7 consecutive repeat copies span residues 91–95 (PASAP), 109–113 (AVSVL), 114–118 (PVTVP), 122–126 (PVSVP), 128–132 (PVSVP), 134–138 (PVSVK), and 159–163 (PISHP). The interval 91 to 164 (PASAPQVLSP…SHSHPISHPH (74 aa)) is 7 X 5 AA approximate repeats of P-V-S-V-P. 4 disordered regions span residues 147 to 166 (QIAH…PHHH), 282 to 311 (QQQQ…AGAA), 324 to 365 (VPTT…TSAA), and 388 to 410 (PATS…NSNS). Residues 344–365 (SNSATASAPTTPSPAGSVTSAA) show a composition bias toward low complexity. The region spanning 442-524 (RTLFVSGLPM…QTIRLEFAKS (83 aa)) is the RRM domain.

As to expression, expressed in neural precursors and their daughter cells in the embryonic peripheral nervous system. Less abundant in a number of glial cells in the peripheral and central nervous systems and also present at low levels in the developing gut.

It is found in the nucleus. In terms of biological role, may play a role in the development or function of the peripheral nervous system by regulating the processing of nervous system-specific transcripts. The chain is Protein couch potato (cpo) from Drosophila melanogaster (Fruit fly).